Consider the following 1035-residue polypeptide: Unconventional myosin IC (1035 aa).

In terms of domain architecture, Myosin motor spans 21–703; sequence GVQDFVLLEN…TLFDTEDAYQ (683 aa). 114–121 contributes to the ATP binding site; sequence GESGSGKT. Ser304 is modified (phosphoserine). Thr310 carries the phosphothreonine modification. The interval 578-600 is actin-binding; it reads LNNLMDILMCKEPSYIRCIKPND. 3 IQ domains span residues 696–728, 729–751, and 752–779; these read FDTEDAYQEKKHEIAAIIQAHWKGLMQRRKYLK, LRAQVIIMQSYCRRKLAQQAAKK, and RREAADKIRAFIKGFITRNDAPNGFNEE. Residues 857-1035 enclose the TH1 domain; sequence KNNYASSVST…KGHLVIIGTQ (179 aa).

This sequence belongs to the TRAFAC class myosin-kinesin ATPase superfamily. Myosin family. As to quaternary structure, binds F-actin. In terms of tissue distribution, in the embryo, expressed in gastric caeca, midgut cells of the proventriculus, and in the mid and hindgut. In the larval and adult gut brush border, expressed in the microvilli. Also expressed at high levels in follicle cells during oogenesis.

It is found in the cytoplasm. It localises to the cell cortex. The protein localises to the cell membrane. In terms of biological role, unconventional myosin that functions as actin-based motor protein with ATPase activity. Binds to membranes enriched in phosphatidylinositol 4-5-bisphosphate, and can glide along actin filaments when anchored to a lipid bilayer. Functions as antagonist for Myo31DF, an unconventional myosin with an essential role in the establishment of body left-right asymmetry. This chain is Unconventional myosin IC (Myo61F), found in Drosophila melanogaster (Fruit fly).